A 470-amino-acid chain; its full sequence is ATP synthase subunit beta (470 aa).

An ATP-binding site is contributed by 157–164 (GGAGVGKT).

It belongs to the ATPase alpha/beta chains family. As to quaternary structure, F-type ATPases have 2 components, CF(1) - the catalytic core - and CF(0) - the membrane proton channel. CF(1) has five subunits: alpha(3), beta(3), gamma(1), delta(1), epsilon(1). CF(0) has three main subunits: a(1), b(2) and c(9-12). The alpha and beta chains form an alternating ring which encloses part of the gamma chain. CF(1) is attached to CF(0) by a central stalk formed by the gamma and epsilon chains, while a peripheral stalk is formed by the delta and b chains.

Its subcellular location is the cell inner membrane. The enzyme catalyses ATP + H2O + 4 H(+)(in) = ADP + phosphate + 5 H(+)(out). In terms of biological role, produces ATP from ADP in the presence of a proton gradient across the membrane. The catalytic sites are hosted primarily by the beta subunits. The chain is ATP synthase subunit beta from Citrifermentans bemidjiense (strain ATCC BAA-1014 / DSM 16622 / JCM 12645 / Bem) (Geobacter bemidjiensis).